The following is a 185-amino-acid chain: HTH-type transcriptional regulator PuuR (185 aa).

A disordered region spans residues 1–20; the sequence is MSDEGLAPGKRLSEIRQQQG. Residues 12-66 form the HTH cro/C1-type domain; the sequence is LSEIRQQQGLSQRRAAELSGLTHSAISTIEQDKVSPAISTLQKLLKVYGLSLSEF. The segment at residues 23 to 42 is a DNA-binding region (H-T-H motif); that stretch reads QRRAAELSGLTHSAISTIEQ. The Cupin type-2 domain occupies 111–178; the sequence is FETYQPGTTT…TSAGICRIIS (68 aa).

Its pathway is amine and polyamine degradation; putrescine degradation [regulation]. In terms of biological role, represses puuA, puuD and puuP. The polypeptide is HTH-type transcriptional regulator PuuR (puuR) (Escherichia coli (strain K12)).